The following is a 338-amino-acid chain: Anthranilate phosphoribosyltransferase (338 aa).

5-phospho-alpha-D-ribose 1-diphosphate is bound by residues Gly80, 83 to 84 (GD), Thr88, 90 to 93 (NIST), 108 to 116 (KHGNRAVSS), and Ser120. Gly80 serves as a coordination point for anthranilate. Ser92 contributes to the Mg(2+) binding site. Asn111 serves as a coordination point for anthranilate. An anthranilate-binding site is contributed by Arg166. Mg(2+) contacts are provided by Asp225 and Glu226.

The protein belongs to the anthranilate phosphoribosyltransferase family. Homodimer. It depends on Mg(2+) as a cofactor.

It catalyses the reaction N-(5-phospho-beta-D-ribosyl)anthranilate + diphosphate = 5-phospho-alpha-D-ribose 1-diphosphate + anthranilate. The protein operates within amino-acid biosynthesis; L-tryptophan biosynthesis; L-tryptophan from chorismate: step 2/5. Its function is as follows. Catalyzes the transfer of the phosphoribosyl group of 5-phosphorylribose-1-pyrophosphate (PRPP) to anthranilate to yield N-(5'-phosphoribosyl)-anthranilate (PRA). The polypeptide is Anthranilate phosphoribosyltransferase (Thermoanaerobacter sp. (strain X514)).